Consider the following 417-residue polypeptide: UDP-N-acetylglucosamine 1-carboxyvinyltransferase (417 aa).

22–23 (KN) is a phosphoenolpyruvate binding site. Arg92 contacts UDP-N-acetyl-alpha-D-glucosamine. Cys116 serves as the catalytic Proton donor. 2-(S-cysteinyl)pyruvic acid O-phosphothioketal is present on Cys116. UDP-N-acetyl-alpha-D-glucosamine contacts are provided by Asp304 and Ile326.

The protein belongs to the EPSP synthase family. MurA subfamily.

The protein localises to the cytoplasm. It carries out the reaction phosphoenolpyruvate + UDP-N-acetyl-alpha-D-glucosamine = UDP-N-acetyl-3-O-(1-carboxyvinyl)-alpha-D-glucosamine + phosphate. The protein operates within cell wall biogenesis; peptidoglycan biosynthesis. Cell wall formation. Adds enolpyruvyl to UDP-N-acetylglucosamine. The protein is UDP-N-acetylglucosamine 1-carboxyvinyltransferase of Geotalea uraniireducens (strain Rf4) (Geobacter uraniireducens).